The following is a 287-amino-acid chain: NAD-dependent protein deacylase sir-2.2 (287 aa).

Residues 10–287 enclose the Deacetylase sirtuin-type domain; it reads AELCENSLKK…YKISDVLKEM (278 aa). NAD(+)-binding positions include 35–55 and 116–119; these read GAGI…VGLY and QNVD. The active-site Proton acceptor is the H134. C142, C145, C196, and C199 together coordinate Zn(2+). NAD(+) contacts are provided by residues 236-238, 262-264, and I280; these read GTS and NIG.

It belongs to the sirtuin family. Class II subfamily. In terms of assembly, interacts with pyc-1, pcca-1 and mccc-1. Requires Zn(2+) as cofactor. As to expression, ubiquitously expressed with high expression in the pharynx, body wall muscles and gonad.

It is found in the mitochondrion matrix. It localises to the mitochondrion. The catalysed reaction is N(6)-acetyl-L-lysyl-[protein] + NAD(+) + H2O = 2''-O-acetyl-ADP-D-ribose + nicotinamide + L-lysyl-[protein]. Functionally, NAD-dependent protein deacylase. Catalyzes the NAD-dependent hydrolysis of acyl groups from lysine residues. Plays a role in oxidative stress resistance. This Caenorhabditis elegans protein is NAD-dependent protein deacylase sir-2.2 (sir-2.2).